Reading from the N-terminus, the 81-residue chain is Large ribosomal subunit protein bL31B (81 aa).

The protein belongs to the bacterial ribosomal protein bL31 family. Type B subfamily. Part of the 50S ribosomal subunit.

The polypeptide is Large ribosomal subunit protein bL31B (Borreliella burgdorferi (strain ATCC 35210 / DSM 4680 / CIP 102532 / B31) (Borrelia burgdorferi)).